A 729-amino-acid polypeptide reads, in one-letter code: MLSTQFNRDNQYQAITKPSLLAGCIALALLPSAAFAAPATEETVIVEGSATAPDDGENDYSVTSTSAGTKMQMTQRDIPQSVTIVSQQRMEDQQLQTLGEVMENTLGISKSQADSDRALYYSRGFQIDNYMVDGIPTYFESRWNLGDALSDMALFERVEVVRGATGLMTGTGNPSAAINMVRKHATSREFKGDVSAEYGSWNKERYVADLQSPLTEDGKIRARIVGGYQNNDSWLDRYNSEKTFFSGIVDADLGDLTTLSAGYEYQRIDVNSPTWGGLPRWNTDGSSNSYDRARSTAPDWAYNDKEINKVFMTLKQQFADTWQATLNATHSEVEFDSKMMYVDAYVNKADGMLVGPYSNYGPGFDYVGGTGWNSGKRKVDALDLFADGSYELFGRQHNLMFGGSYSKQNNRYFSSWANIFPDEIGSFYNFNGNFPQTDWSPQSLAQDDTTHMKSLYAATRVTLADPLHLILGARYTNWRVDTLTYSMEKNHTTPYAGLVFDINDNWSTYASYTSIFQPQNDRDSSGKYLAPITGNNYELGLKSDWMNSRLTTTLAIFRIEQDNVAQSTGTPIPGSNGETAYKAVDGTVSKGVEFELNGAITDNWQLTFGATRYIAEDNEGNAVNPNLPRTTVKMFTSYRLPVMPELTVGGGVNWQNRVYTDTVTPYGTFRAEQGSYALVDLFTRYQVTKNFSLQGNVNNLFDKTYDTNVEGSIVYGTPRNFSITGTYQF.

The signal sequence occupies residues M1–A36. The short motif at E42–S49 is the TonB box element. The interval G48–Q72 is disordered. A compositionally biased stretch (polar residues) spans Y60–Q72. The 110-residue stretch at T74–K183 folds into the TBDR plug domain. 6 residues coordinate Fe(III)-coprogen: R117, R142, W275, Y357, N373, and W416. The 541-residue stretch at E189–F729 folds into the TBDR beta-barrel domain. Positions S712–F729 match the TonB C-terminal box motif.

Belongs to the TonB-dependent receptor family.

The protein resides in the cell outer membrane. In terms of biological role, involved in the active transport across the outer membrane of iron complexed with linear hydroxamate siderophores coprogen, rhodotorulic acid and ferrioxamine B. Binds Fe-coprogen with high affinity, rhodotorulic acid to a lesser extent, and weakly to ferrioxamine B. Selective for planar siderophores. Does not use cyclic siderophores ferrichrome nor ferrioxamine E as substrates. This is Hydroxamate siderophore receptor FhuE from Escherichia coli (strain K12).